We begin with the raw amino-acid sequence, 464 residues long: Protein FAM90A15 (464 aa).

Disordered regions lie at residues 1-42, 70-389, and 415-437; these read MMAR…DPRL, PATL…HDGA, and HSPEKPGAFLAQSPHVSEKSEAP. 2 stretches are compositionally biased toward basic and acidic residues: residues 74 to 89 and 97 to 114; these read GKKEGKENLKPWKPRV and NKDKGEKEERPRQQDPQR. The span at 180–197 shows a compositional bias: low complexity; that stretch reads LASLSPLRKASLSSSSSL.

Belongs to the FAM90 family.

The protein is Protein FAM90A15 of Homo sapiens (Human).